A 777-amino-acid polypeptide reads, in one-letter code: Glucocorticoid receptor (777 aa).

The segment covering 1-14 (MDSKESLTPGREEN) has biased composition (basic and acidic residues). The interval 1–23 (MDSKESLTPGREENPSSVLAQER) is disordered. Residues 1 to 420 (MDSKESLTPG…TATTGPPPKL (420 aa)) form a modulating region. At Thr8 the chain carries Phosphothreonine. At Arg23 the chain carries Omega-N-methylarginine. 4 positions are modified to phosphoserine: Ser45, Ser113, Ser134, and Ser141. Residues 130–140 (NRSTSVPENPK) are compositionally biased toward polar residues. A disordered region spans residues 130 to 183 (NRSTSVPENPKSSASTAVSAAPTEKEFPKTHSDISSEQQHLKGQTGTNGGNVKL). Residues 141 to 150 (SSASTAVSAA) are compositionally biased toward low complexity. A compositionally biased stretch (basic and acidic residues) spans 152 to 163 (TEKEFPKTHSDI). Residues 164-174 (SSEQQHLKGQT) are compositionally biased toward polar residues. Ser203, Ser211, and Ser226 each carry phosphoserine. A Glycyl lysine isopeptide (Lys-Gly) (interchain with G-Cter in SUMO2) cross-link involves residue Lys258. The residue at position 267 (Ser267) is a Phosphoserine. Glycyl lysine isopeptide (Lys-Gly) (interchain with G-Cter in SUMO); alternate cross-links involve residues Lys277 and Lys293. Glycyl lysine isopeptide (Lys-Gly) (interchain with G-Cter in SUMO2); alternate cross-links involve residues Lys277 and Lys293. A compositionally biased stretch (low complexity) spans 394–414 (SSPSMRPDVSSPPSSSSTATT). The tract at residues 394-415 (SSPSMRPDVSSPPSSSSTATTG) is disordered. Ser404 carries the phosphoserine modification. Lys419 participates in a covalent cross-link: Glycyl lysine isopeptide (Lys-Gly) (interchain with G-Cter in ubiquitin). 2 NR C4-type zinc fingers span residues 421 to 441 (CLVCSDEASGCHYGVLTCGSC) and 457 to 476 (CAGRNDCIIDKIRRKNCPAC). The segment at residues 421 to 486 (CLVCSDEASG…RYRKCLQAGM (66 aa)) is a DNA-binding region (nuclear receptor). An N6-acetyllysine mark is found at Lys480, Lys492, Lys494, and Lys495. The tract at residues 485-777 (GMNLEARKTK…NIKKLLFHQK (293 aa)) is interaction with CLOCK. The tract at residues 487-523 (NLEARKTKKKIKGIQQATTGVSQETPENPANKTIVPA) is hinge. Positions 524–758 (TLPQLTPTLV…FPEMLAEIIT (235 aa)) constitute an NR LBD domain. The tract at residues 532–697 (LVSLLEVIEP…EIRMTYIKEL (166 aa)) is interaction with CRY1. Lys703 participates in a covalent cross-link: Glycyl lysine isopeptide (Lys-Gly) (interchain with G-Cter in SUMO).

This sequence belongs to the nuclear hormone receptor family. NR3 subfamily. In terms of assembly, heteromultimeric cytoplasmic complex with HSP90AA1, HSPA1A/HSPA1B, and FKBP5 or another immunophilin such as PPID, STIP1, or the immunophilin homolog PPP5C. Upon ligand binding FKBP5 dissociates from the complex and FKBP4 takes its place, thereby linking the complex to dynein and mediating transport to the nucleus, where the complex dissociates. Probably forms a complex composed of chaperones HSP90 and HSP70, co-chaperones CDC37, PPP5C, TSC1 and client protein TSC2, CDK4, AKT, RAF1 and NR3C1; this complex does not contain co-chaperones STIP1/HOP and PTGES3/p23. Directly interacts with UNC45A. Binds to DNA as a homodimer, and as heterodimer with NR3C2 or the retinoid X receptor. Binds STAT5A and STAT5B homodimers and heterodimers. Interacts with NRIP1, POU2F1, POU2F2 and TRIM28. Interacts with several coactivator complexes, including the SMARCA4 complex, CREBBP/EP300, TADA2L (Ada complex) and p160 coactivators such as NCOA2 and NCOA6. Interaction with BAG1 inhibits transactivation. Interacts with HEXIM1 and TGFB1I1. Interacts with NCOA1. Interacts with NCOA3, SMARCA4, SMARCC1, SMARCD1, and SMARCE1. Interacts with CLOCK, CRY1 and CRY2 in a ligand-dependent fashion. Interacts with CIART. Interacts with RWDD3. Interacts with UBE2I/UBC9 and this interaction is enhanced in the presence of RWDD3. Interacts with GRIP1. Interacts with NR4A3 (via nuclear receptor DNA-binding domain), represses transcription activity of NR4A3 on the POMC promoter Nur response element (NurRE). Directly interacts with PNRC2 to attract and form a complex with UPF1 and DCP1A; the interaction leads to rapid mRNA degradation. Interacts with GSK3B. Interacts with FNIP1 and FNIP2. Interacts (via C-terminus) with HNRNPU (via C-terminus). Interacts with MCM3AP. Interacts (via domain NR LBD) with HSP90AA1 and HSP90AB1. In the absence of hormonal ligand, interacts with TACC1. Interacts (via NR LBD domain) with ZNF764 (via KRAB domain); the interaction regulates transcription factor activity of NR3C1 by directing its actions toward certain biologic pathways. Post-translationally, acetylation by CLOCK reduces its binding to glucocorticoid response elements and its transcriptional activity. In terms of processing, increased proteasome-mediated degradation in response to glucocorticoids. Phosphorylated in the absence of hormone; becomes hyperphosphorylated in the presence of glucocorticoid. The Ser-203, Ser-226 and Ser-404-phosphorylated forms are mainly cytoplasmic, and the Ser-211-phosphorylated form is nuclear. Phosphorylation at Ser-211 increases transcriptional activity. Phosphorylation at Ser-203, Ser-226 and Ser-404 decreases signaling capacity. Phosphorylation at Ser-404 may protect from glucocorticoid-induced apoptosis. Phosphorylation at Ser-203 and Ser-211 is not required in regulation of chromosome segregation. May be dephosphorylated by PPP5C, attenuates NR3C1 action. Post-translationally, ubiquitinated by UBR5, leading to its degradation: UBR5 specifically recognizes and binds ligand-bound NR3C1 when it is not associated with coactivators (NCOAs). In presence of NCOAs, the UBR5-degron is not accessible, preventing its ubiquitination and degradation. In terms of processing, sumoylation at Lys-277 and Lys-293 negatively regulates its transcriptional activity. Sumoylation at Lys-703 positively regulates its transcriptional activity in the presence of RWDD3. Sumoylation at Lys-277 and Lys-293 is dispensable whereas sumoylation at Lys-703 is critical for the stimulatory effect of RWDD3 on its transcriptional activity. Heat shock increases sumoylation in a RWDD3-dependent manner.

The protein localises to the cytoplasm. It is found in the nucleus. Its subcellular location is the mitochondrion. It localises to the cytoskeleton. The protein resides in the spindle. The protein localises to the microtubule organizing center. It is found in the centrosome. Its subcellular location is the chromosome. It localises to the nucleoplasm. Receptor for glucocorticoids (GC). Has a dual mode of action: as a transcription factor that binds to glucocorticoid response elements (GRE), both for nuclear and mitochondrial DNA, and as a modulator of other transcription factors. Affects inflammatory responses, cellular proliferation and differentiation in target tissues. Involved in chromatin remodeling. Plays a role in rapid mRNA degradation by binding to the 5' UTR of target mRNAs and interacting with PNRC2 in a ligand-dependent manner which recruits the RNA helicase UPF1 and the mRNA-decapping enzyme DCP1A, leading to RNA decay. Could act as a coactivator for STAT5-dependent transcription upon growth hormone (GH) stimulation and could reveal an essential role of hepatic GR in the control of body growth. Mediates glucocorticoid-induced apoptosis. Promotes accurate chromosome segregation during mitosis. May act as a tumor suppressor. May play a negative role in adipogenesis through the regulation of lipolytic and antilipogenic gene expression. This Pongo abelii (Sumatran orangutan) protein is Glucocorticoid receptor (NR3C1).